The primary structure comprises 259 residues: 5'-nucleotidase SurE (259 aa).

Residues aspartate 8, aspartate 9, serine 40, and asparagine 92 each contribute to the a divalent metal cation site.

The protein belongs to the SurE nucleotidase family. A divalent metal cation serves as cofactor.

It is found in the cytoplasm. It carries out the reaction a ribonucleoside 5'-phosphate + H2O = a ribonucleoside + phosphate. Its function is as follows. Nucleotidase that shows phosphatase activity on nucleoside 5'-monophosphates. The polypeptide is 5'-nucleotidase SurE (Stenotrophomonas maltophilia (strain K279a)).